The chain runs to 143 residues: Large ribosomal subunit protein uL13c (143 aa).

This sequence belongs to the universal ribosomal protein uL13 family. In terms of assembly, part of the 50S ribosomal subunit.

The protein localises to the plastid. Its subcellular location is the chloroplast. The protein is Large ribosomal subunit protein uL13c of Guillardia theta (Cryptophyte).